The chain runs to 560 residues: E3 SUMO-protein ligase CBX4 (560 aa).

Positions 1–75 (MELPAVGEHV…LMGYRKRGPK (75 aa)) are involved in interaction with H3C15 and H3C1. Residues 1–539 (MELPAVGEHV…LSEFKPFFGN (539 aa)) form an interaction with BMI1 region. Positions 11 to 69 (FAVESIEKKRIRKGRVEYLVKWRGWSPKYNTWEPEENILDPRLLIAFQNRERQEQLMGY) constitute a Chromo domain. Residues Lys77, Lys106, Lys114, and Lys125 each participate in a glycyl lysine isopeptide (Lys-Gly) (interchain with G-Cter in SUMO2) cross-link. Positions 92-152 (VLTGLQDSST…PPGKSGKYYY (61 aa)) are disordered. Lys149 carries the N6-acetyllysine; alternate modification. Lys149 is covalently cross-linked (Glycyl lysine isopeptide (Lys-Gly) (interchain with G-Cter in SUMO2); alternate). Residues Lys157, Lys167, and Lys178 each participate in a glycyl lysine isopeptide (Lys-Gly) (interchain with G-Cter in SUMO2) cross-link. Phosphoserine is present on Ser182. Residues Lys191, Lys205, Lys212, Lys223, Lys249, Lys268, Lys278, and Lys280 each participate in a glycyl lysine isopeptide (Lys-Gly) (interchain with G-Cter in SUMO2) cross-link. The tract at residues 217-243 (AAGAPGKGSEKGPPNGMMPAPKEAVTG) is disordered. Composition is skewed to basic and acidic residues over residues 281–291 (SGEVAEGEARS) and 298–331 (AADERHPPADRTFKKAAGAEEKKVEAPPKRREEE). A disordered region spans residues 281 to 404 (SGEVAEGEAR…HHHHHHAVGL (124 aa)). Glycyl lysine isopeptide (Lys-Gly) (interchain with G-Cter in SUMO2) cross-links involve residues Lys320, Lys352, and Lys365. Over residues 380-401 (PSHHPHPHPHHHHHHHHHHHHA) the composition is skewed to basic residues. Position 467 is a phosphoserine (Ser467). Lys494 participates in a covalent cross-link: Glycyl lysine isopeptide (Lys-Gly) (interchain with G-Cter in SUMO2); alternate. A Glycyl lysine isopeptide (Lys-Gly) (interchain with G-Cter in SUMO); alternate cross-link involves residue Lys494. A Phosphothreonine; by HIPK2 modification is found at Thr497. Residues 509–521 (AAPTTTAEKPPAE) are compositionally biased toward low complexity. The tract at residues 509 to 528 (AAPTTTAEKPPAEAQDEPAE) is disordered. Residues 531 to 556 (SEFKPFFGNIIITDVTANCLTVTFKE) are involved in interaction with H3C15 and RNF2. The segment at 540-560 (IIITDVTANCLTVTFKEYVTV) is interaction with RNF2.

As to quaternary structure, interacts with histone H3-K9Me3. Interacts with CHTOP. Component of a PRC1-like complex. The composition of the PRC1 complex differs between the PRC1 complex in pluripotent embryonic stem cells containing RNF2, CBX7 and PCGF2, and the PRC1 complex in differentiating cells containing RNF2, CBX2, CBX4 and BMI1. Self-associates. Interacts with SUV39H1 and HIPK2. Interacts with CSNK2B. May interact with H3C15, H3C1 and RNF2. Interacts with SUMO1P1/SUMO5. Interacts with PRDM1/Blimp-1. Ubiquitinated. Ubiquitination regulates the function of the Polycomb group (PcG) multiprotein PRC1-like complex. Deubiquitinated by USP26. Post-translationally, phosphorylated on Thr-497 by HIPK2 upon DNA damage. This phosphorylation stimulates E3 SUMO-protein ligase activity and promotes sumoylation on Lys-494, as well as sumoylation of other target proteins, such as HNRNPK. As to expression, ubiquitous.

It localises to the nucleus. The protein resides in the nucleus speckle. It participates in protein modification; protein sumoylation. Functionally, E3 SUMO-protein ligase that catalyzes sumoylation of target proteins by promoting the transfer of SUMO from the E2 enzyme to the substrate. Involved in the sumoylation of HNRNPK, a p53/TP53 transcriptional coactivator, hence indirectly regulates p53/TP53 transcriptional activation resulting in p21/CDKN1A expression. Monosumoylates ZNF131. Its function is as follows. Component of a Polycomb group (PcG) multiprotein PRC1-like complex, a complex class required to maintain the transcriptionally repressive state of many genes, including Hox genes, throughout development. PcG PRC1 complex acts via chromatin remodeling and modification of histones; it mediates monoubiquitination of histone H2A 'Lys-119', rendering chromatin heritably changed in its expressibility. Binds to histone H3 trimethylated at 'Lys-9' (H3K9me3). Plays a role in the lineage differentiation of the germ layers in embryonic development. The chain is E3 SUMO-protein ligase CBX4 (CBX4) from Homo sapiens (Human).